A 725-amino-acid chain; its full sequence is Nitrogen regulatory protein areA (725 aa).

3 disordered regions span residues 1–90 (MRLS…RTNS), 429–464 (NQGG…PRTA), and 479–524 (GSAS…PEPA). Over residues 39-48 (PAEHSAHPSV) the composition is skewed to basic and acidic residues. 2 stretches are compositionally biased toward polar residues: residues 442 to 452 (ASVSEVRNQNQ) and 479 to 500 (GSAS…SGLS). The GATA-type zinc finger occupies 525 to 549 (CTNCFTQTTPLWRRNPEGQPLCNAC). Positions 574-714 (RSSANTLTVG…NHSIAGGQGA (141 aa)) are disordered. Polar residues-rich tracts occupy residues 575–584 (SSANTLTVGT) and 597–624 (IQHA…SSTL). 2 stretches are compositionally biased toward low complexity: residues 631-656 (PIAA…QVAP) and 678-704 (KSAA…ANPA).

Its subcellular location is the nucleus. Functionally, major nitrogen regulatory protein. This chain is Nitrogen regulatory protein areA (AREA), found in Penicillium chrysogenum (Penicillium notatum).